Here is a 44-residue protein sequence, read N- to C-terminus: Protein non-structural 7b (44 aa).

A helical membrane pass occupies residues 9 to 29 (FYLCFLAFLLFLVLIMLIIFW).

The protein localises to the host membrane. The polypeptide is Protein non-structural 7b (Homo sapiens (Human)).